A 409-amino-acid polypeptide reads, in one-letter code: Dihydroorotase (409 aa).

Zn(2+) is bound by residues His57 and His59. Residues 59-61 (HLR) and Asn91 contribute to the substrate site. Zn(2+) is bound by residues Lys139, His168, His208, and Asp276. Lys139 is subject to N6-carboxylysine. Asp276 is an active-site residue. Residues His280 and 290–291 (AG) contribute to the substrate site.

This sequence belongs to the metallo-dependent hydrolases superfamily. DHOase family. Class I DHOase subfamily. Zn(2+) serves as cofactor.

It catalyses the reaction (S)-dihydroorotate + H2O = N-carbamoyl-L-aspartate + H(+). The protein operates within pyrimidine metabolism; UMP biosynthesis via de novo pathway; (S)-dihydroorotate from bicarbonate: step 3/3. Catalyzes the reversible cyclization of carbamoyl aspartate to dihydroorotate. This Thermococcus kodakarensis (strain ATCC BAA-918 / JCM 12380 / KOD1) (Pyrococcus kodakaraensis (strain KOD1)) protein is Dihydroorotase.